The following is a 190-amino-acid chain: B3 domain-containing protein At4g01580 (190 aa).

The segment at 1–25 (MVITRNMKARATSVSHRQSQQDPES) is disordered. Residues 12–23 (TSVSHRQSQQDP) are compositionally biased toward polar residues. Residues 29–122 (KFFKLVLPST…SFRVIIFNAS (94 aa)) constitute a DNA-binding region (TF-B3).

It localises to the nucleus. The protein is B3 domain-containing protein At4g01580 of Arabidopsis thaliana (Mouse-ear cress).